A 524-amino-acid polypeptide reads, in one-letter code: MKPQELAKEVAKRRTFAIISHPDAGKTTITEQLLLFGGVIREAGTVKGRKSGHFAKSDWMEIEKKRGISVTSSVMQFNYQGKRINILDTPGHEDFSEDTYRTLMAVDAAVMVIDSAKGIEAQTKKLFKVVKQRGIPIFTFMNKLDRDGREPLDLIAELEDLLGIEGYAMNWPIGMGKGLKGLYDRVNQRIELYRREGDDRFLPLNDQGQLDPSQPLTQDSIYTQTLDDIELLNDAGNQFNLKKIMAGEQTPVFFGSALTNFGVETFLNSFVQYAPEPGPKKTEQGGEVNPTNPEFSAFVFKIQANMNPAHRDRIAFVRIVSGEFERGMDVILHRTGKTMRLNNSTEFMADTRETVSTAVAGDIVGLYDTGNFQIGDTIYQGKEPIQFEKLPQFTPELFVRVTPKNVMKQKSFHKGMQQLVQEGAVQLYKTYNTNDYILGAVGQLQFEVFQFRMLHEYHSEVIMTPIGSRTARWINPDQLDEKMSSSRNLLVQDIHGDPLFLFENQYAERWFADKYPDVKLTAKM.

The region spanning 11-278 (AKRRTFAIIS…SFVQYAPEPG (268 aa)) is the tr-type G domain. Residues 20–27 (SHPDAGKT), 88–92 (DTPGH), and 142–145 (NKLD) each bind GTP.

It belongs to the TRAFAC class translation factor GTPase superfamily. Classic translation factor GTPase family. PrfC subfamily.

The protein resides in the cytoplasm. In terms of biological role, increases the formation of ribosomal termination complexes and stimulates activities of RF-1 and RF-2. It binds guanine nucleotides and has strong preference for UGA stop codons. It may interact directly with the ribosome. The stimulation of RF-1 and RF-2 is significantly reduced by GTP and GDP, but not by GMP. The chain is Peptide chain release factor 3 from Lacticaseibacillus casei (strain BL23) (Lactobacillus casei).